A 146-amino-acid chain; its full sequence is Myoglobin (146 aa).

The Globin domain occupies 2–140 (ADLDAVLKCW…VIADLEANYK (139 aa)). Residue H59 participates in nitrite binding. Residue H59 coordinates O2. H88 is a heme b binding site.

This sequence belongs to the globin family. Monomeric.

The protein localises to the cytoplasm. Its subcellular location is the sarcoplasm. The catalysed reaction is Fe(III)-heme b-[protein] + nitric oxide + H2O = Fe(II)-heme b-[protein] + nitrite + 2 H(+). It carries out the reaction H2O2 + AH2 = A + 2 H2O. In terms of biological role, monomeric heme protein which primary function is to store oxygen and facilitate its diffusion within muscle tissues. Reversibly binds oxygen through a pentacoordinated heme iron and enables its timely and efficient release as needed during periods of heightened demand. Depending on the oxidative conditions of tissues and cells, and in addition to its ability to bind oxygen, it also has a nitrite reductase activity whereby it regulates the production of bioactive nitric oxide. Under stress conditions, like hypoxia and anoxia, it also protects cells against reactive oxygen species thanks to its pseudoperoxidase activity. This chain is Myoglobin (mb), found in Katsuwonus pelamis (Skipjack tuna).